The primary structure comprises 443 residues: Glycerol-3-phosphate acyltransferase 3-like (443 aa).

A run of 3 helical transmembrane segments spans residues 15-35 (WFSC…SLGI), 146-166 (ISLR…CILL), and 170-190 (ITLT…VGFL). The HXXXXD motif motif lies at 238-243 (HTSPID). The chain crosses the membrane as a helical span at residues 358–378 (IMSYLLRMMTSWAIVCNVWYL).

Belongs to the 1-acyl-sn-glycerol-3-phosphate acyltransferase family.

The protein resides in the endoplasmic reticulum membrane. The enzyme catalyses sn-glycerol 3-phosphate + an acyl-CoA = a 1-acyl-sn-glycero-3-phosphate + CoA. The catalysed reaction is a 1-acyl-sn-glycero-3-phosphate + an acyl-CoA = a 1,2-diacyl-sn-glycero-3-phosphate + CoA. The protein operates within glycerolipid metabolism; triacylglycerol biosynthesis. It functions in the pathway phospholipid metabolism; CDP-diacylglycerol biosynthesis; CDP-diacylglycerol from sn-glycerol 3-phosphate: step 1/3. Its function is as follows. May transfer the acyl-group from acyl-coA to the sn-1 position of glycerol-3-phosphate, an essential step in glycerolipid biosynthesis. Also transfers the acyl-group from acyl-coA to the sn-2 position of 1-acyl-sn-glycerol-3-phosphate (lysophosphatidic acid, or LPA), forming 1,2-diacyl-sn-glycerol-3-phosphate (phosphatidic acid, or PA). This is Glycerol-3-phosphate acyltransferase 3-like (agpat9l) from Danio rerio (Zebrafish).